We begin with the raw amino-acid sequence, 189 residues long: GTPase KRas (189 aa).

Residue methionine 1 is modified to N-acetylmethionine. N-acetylthreonine; in GTPase KRas, N-terminally processed is present on threonine 2. Residues glycine 10–alanine 18, valine 29–threonine 35, and alanine 59–glycine 60 each bind GTP. The short motif at tyrosine 32–tyrosine 40 is the Effector region element. Lysine 104 carries the N6-acetyllysine modification. Asparagine 116–aspartate 119 lines the GTP pocket. Positions tyrosine 166–lysine 185 are hypervariable region. Lysine 170 participates in a covalent cross-link: Glycyl lysine isopeptide (Lys-Gly) (interchain with G-Cter in ubiquitin). Residue cysteine 180 is the site of S-palmitoyl cysteine attachment. 3 N6-palmitoyl lysine lipidation sites follow: lysine 182, lysine 184, and lysine 185. Cysteine 186 is subject to Cysteine methyl ester. Cysteine 186 is lipidated: S-farnesyl cysteine. Residues valine 187–methionine 189 constitute a propeptide, removed in mature form.

This sequence belongs to the small GTPase superfamily. Ras family. In terms of assembly, interacts with PHLPP. Interacts (active GTP-bound form preferentially) with RGS14. Interacts (when farnesylated) with PDE6D; this promotes dissociation from the cell membrane. Interacts with SOS1. Interacts (when farnesylated) with GPR31. Interacts with RAP1GDS1. Interacts (active GTP-bound form) with both SHOC2 and PP1c (all isoforms) to form a tertiary complex; SHOC2 and PP1c preferably bind M-Ras/MRAS, but they also bind K-Ras/KRAS, N-Ras/NRAS and H-Ras/HRAS. Interacts (GTP-bound form) with MAPKAP1/SIN1; inhibiting K-Ras/KRAS activity. Interacts (when farnesylated) with GPR31. Acetylation at Lys-104 prevents interaction with guanine nucleotide exchange factors (GEFs). In terms of processing, ubiquitinated by the BCR(LZTR1) E3 ubiquitin ligase complex at Lys-170 in a non-degradative manner, leading to inhibit Ras signaling by decreasing Ras association with membranes. Post-translationally, palmitoylated at Lys-182, Lys-184 and Lys-185. Lysine-depalmitoylation by SIRT2 promotes its localization to endomembranes in endocytic pathways.

It localises to the cell membrane. It is found in the endomembrane system. The protein localises to the cytoplasm. The protein resides in the cytosol. The enzyme catalyses GTP + H2O = GDP + phosphate + H(+). Alternates between an inactive form bound to GDP and an active form bound to GTP. Activated by a guanine nucleotide-exchange factor (GEF) and inactivated by a GTPase-activating protein (GAP). Interaction with SOS1 promotes exchange of bound GDP to GTP. Ras proteins bind GDP/GTP and possess intrinsic GTPase activity. Plays an important role in the regulation of cell proliferation. Plays a role in promoting oncogenic events by inducing transcriptional silencing of tumor suppressor genes (TSGs) in colorectal cancer (CRC) cells in a ZNF304-dependent manner. The chain is GTPase KRas (Kras) from Rattus norvegicus (Rat).